The following is a 1058-amino-acid chain: Probable plasma membrane ATPase (1058 aa).

Residues 1–29 show a composition bias toward polar residues; that stretch reads MDNNQIPKNSPESSAINSAESSPKSNVSS. The disordered stretch occupies residues 1–123; it reads MDNNQIPKNS…SSSGKKEEDY (123 aa). The Cytoplasmic segment spans residues 1–212; the sequence is MDNNQIPKNS…DVKRYPILEF (212 aa). Over residues 31–40 the composition is skewed to basic and acidic residues; it reads VLHENHHKEQ. Over residues 41-66 the composition is skewed to low complexity; that stretch reads QQLQQQLQQEQQQQQLPTTPQSEPTQ. Over residues 96-111 the composition is skewed to polar residues; sequence SLKTISGYPSSKNTEA. The chain crosses the membrane as a helical span at residues 213-232; that stretch reads LYFMWNPLSWTMEVAAIVSI. Topologically, residues 233–237 are extracellular; that stretch reads ALLDW. Residues 238–258 traverse the membrane as a helical segment; that stretch reads VDFILICALLLLNATIGFIEE. The Cytoplasmic segment spans residues 259–387; sequence NTAGNAVEAL…GHLQVILRNI (129 aa). A helical transmembrane segment spans residues 388 to 407; sequence GLFCISFIAIWVLVELLVDF. Topologically, residues 408 to 425 are extracellular; the sequence is LGYDGYCHGVGGGRCLPL. The helical transmembrane segment at 426–447 threads the bilayer; that stretch reads NNALVLLVGGIPIAMPTVLSVT. Topologically, residues 448 to 783 are cytoplasmic; the sequence is MAIGATQLSK…SSRKIFQRMR (336 aa). The active-site 4-aspartylphosphate intermediate is the D480. The Mg(2+) site is built by D728 and D732. A helical transmembrane segment spans residues 784–805; the sequence is NYVIYSVAATVRICTTFGILTV. At 806-810 the chain is on the extracellular side; it reads AWNFK. The chain crosses the membrane as a helical span at residues 811–833; the sequence is FPTIATVIIAILNDGTMLTISKD. The Cytoplasmic segment spans residues 834 to 849; it reads RVRARNEPDQWNLFEV. A helical membrane pass occupies residues 850–870; that stretch reads FTMALCYGFYLVGSTIVFFAI. At 871–889 the chain is on the extracellular side; sequence IHDGTWFHDAINLRILTDN. The helical transmembrane segment at 890 to 910 threads the bilayer; that stretch reads ELRGLIYLQVSISGLATIFVS. The Cytoplasmic portion of the chain corresponds to 911 to 922; it reads RSQGFSYFERPG. The chain crosses the membrane as a helical span at residues 923–943; sequence NLVIFAFVMSQIVATFIGVYG. Residues 944-967 lie on the Extracellular side of the membrane; that stretch reads FRGYPHDSFSDNPDYPVHGTNFQG. Residues 968-988 traverse the membrane as a helical segment; sequence CGWGWAVCAWIWCFLWYIPMD. Residues 989–1058 are Cytoplasmic-facing; the sequence is FIKLGVTYIL…HKSVVTDNKV (70 aa).

Belongs to the cation transport ATPase (P-type) (TC 3.A.3) family. Type IIIA subfamily.

It is found in the cell membrane. The enzyme catalyses ATP + H2O + H(+)(in) = ADP + phosphate + 2 H(+)(out). Acid pH levels increase its ATPase activity. P-type plasma membrane H+-ATPase (proton pump). The proton gradient it generates drives the active transport of nutrients by H(+) symport. The resulting external acidification and/or internal alkinization may mediate growth responses. This Dictyostelium discoideum (Social amoeba) protein is Probable plasma membrane ATPase (patB).